Here is a 297-residue protein sequence, read N- to C-terminus: MNWISNVVRPKIRDFLARREVPENLWVKCPETGQMVFHKDLEANLYVIPASGYHMRMDAVKRLKATFDDGAYEEVALPEVATDPLKFRDERRYIDRLKDARTKTGYQDAVKVATGMLTELPVTIAVQDFGFMGGSLGMAAGEAVVKGLQTAAEKGTPFIMFAASGGARMQEGILSLMQMPRTTAAIQELRETRKPYIVVLTNPTTGGVTASYAMLGDIQIAEPGALIGFAGPRVIEQTIREKLPDGFQRAEYLHEHGMLDMVVHRHQMRDTLGRLCRMLMKAPALPPKGRLPRPEAA.

The 270-residue stretch at 25 to 294 (LWVKCPETGQ…LPPKGRLPRP (270 aa)) folds into the CoA carboxyltransferase N-terminal domain.

It belongs to the AccD/PCCB family. As to quaternary structure, acetyl-CoA carboxylase is a heterohexamer composed of biotin carboxyl carrier protein (AccB), biotin carboxylase (AccC) and two subunits each of ACCase subunit alpha (AccA) and ACCase subunit beta (AccD).

It localises to the cytoplasm. The catalysed reaction is N(6)-carboxybiotinyl-L-lysyl-[protein] + acetyl-CoA = N(6)-biotinyl-L-lysyl-[protein] + malonyl-CoA. The protein operates within lipid metabolism; malonyl-CoA biosynthesis; malonyl-CoA from acetyl-CoA: step 1/1. In terms of biological role, component of the acetyl coenzyme A carboxylase (ACC) complex. Biotin carboxylase (BC) catalyzes the carboxylation of biotin on its carrier protein (BCCP) and then the CO(2) group is transferred by the transcarboxylase to acetyl-CoA to form malonyl-CoA. The protein is Acetyl-coenzyme A carboxylase carboxyl transferase subunit beta of Xanthobacter autotrophicus (strain ATCC BAA-1158 / Py2).